The sequence spans 293 residues: G1/S-specific cyclin-D3 (293 aa).

A Cyclin N-terminal domain is found at 27 to 152 (VLQSLLRLEE…LVLGKLKWDL (126 aa)). The tract at residues 257 to 293 (REAAQTAPSPVPKAPGGSSSQGPSQTSTPTDVTAIHL) is disordered. Residues serine 265 and serine 280 each carry the phosphoserine modification. The segment covering 271–286 (PGGSSSQGPSQTSTPT) has biased composition (low complexity). A Phosphothreonine modification is found at threonine 284.

It belongs to the cyclin family. Cyclin D subfamily. As to quaternary structure, interacts with the CDK4 and CDK6 protein kinases to form a serine/threonine kinase holoenzyme complex. The cyclin subunit imparts substrate specificity to the complex. Interacts with ATF5. Interacts with EIF3K. Component of the ternary complex cyclin D/CDK4/CDKN1B required for nuclear translocation and modulation of CDK4-mediated kinase activity. Can form similar complexes with either CDKN1A or CDKN2A. Post-translationally, phosphorylation at Thr-284 by MAP kinases is required for ubiquitination and degradation by the DCX(AMBRA1) complex. In terms of processing, ubiquitinated by the DCX(AMBRA1) complex during the transition from G1 to S cell phase, leading to its degradation: ubiquitination is dependent on Thr-284 phosphorylation. The DCX(AMBRA1) complex represents the major regulator of CCND3 stability during the G1/S transition. Polyubiquitinated by the SCF(FBXL2) complex, leading to proteasomal degradation.

The protein resides in the nucleus. Its subcellular location is the cytoplasm. Functionally, regulatory component of the cyclin D3-CDK4 (DC) complex that phosphorylates and inhibits members of the retinoblastoma (RB) protein family including RB1 and regulates the cell-cycle during G(1)/S transition. Phosphorylation of RB1 allows dissociation of the transcription factor E2F from the RB/E2F complex and the subsequent transcription of E2F target genes which are responsible for the progression through the G(1) phase. Hypophosphorylates RB1 in early G(1) phase. Cyclin D-CDK4 complexes are major integrators of various mitogenenic and antimitogenic signals. Component of the ternary complex, cyclin D3/CDK4/CDKN1B, required for nuclear translocation and activity of the cyclin D-CDK4 complex. Shows transcriptional coactivator activity with ATF5 independently of CDK4. The sequence is that of G1/S-specific cyclin-D3 from Rattus norvegicus (Rat).